A 72-amino-acid polypeptide reads, in one-letter code: Translation initiation factor IF-1 (72 aa).

Residues 1-72 (MAKEDVIEMQ…SKGRIVFRAR (72 aa)) form the S1-like domain.

The protein belongs to the IF-1 family. As to quaternary structure, component of the 30S ribosomal translation pre-initiation complex which assembles on the 30S ribosome in the order IF-2 and IF-3, IF-1 and N-formylmethionyl-tRNA(fMet); mRNA recruitment can occur at any time during PIC assembly.

It is found in the cytoplasm. In terms of biological role, one of the essential components for the initiation of protein synthesis. Stabilizes the binding of IF-2 and IF-3 on the 30S subunit to which N-formylmethionyl-tRNA(fMet) subsequently binds. Helps modulate mRNA selection, yielding the 30S pre-initiation complex (PIC). Upon addition of the 50S ribosomal subunit IF-1, IF-2 and IF-3 are released leaving the mature 70S translation initiation complex. This Pseudoalteromonas translucida (strain TAC 125) protein is Translation initiation factor IF-1.